We begin with the raw amino-acid sequence, 61 residues long: MDTKLLDILACPVCKGPLKLSADKTELISKGAGLAYPIRDGIPVMLESEARTLTTDERLDK.

The protein belongs to the UPF0434 family.

In Pseudomonas fluorescens (strain Pf0-1), this protein is UPF0434 protein Pfl01_4174.